Here is a 368-residue protein sequence, read N- to C-terminus: Probable acetylxylan esterase A (368 aa).

The N-terminal stretch at Met-1–Ala-19 is a signal peptide. The propeptide occupies Ser-20 to Arg-28. The interval Gly-32–Phe-304 is catalytic. Ser-149 serves as the catalytic Charge relay system. The N-linked (GlcNAc...) asparagine glycan is linked to Asn-191. The tract at residues Ala-305–Val-333 is ser/Thr-rich linker. A disordered region spans residues Gly-306 to Gly-330. Residues Gly-307–Gly-330 are compositionally biased toward low complexity. In terms of domain architecture, CBM1 spans Gly-332 to Leu-368.

Belongs to the carbohydrate esterase 1 (CE1) family. AxeA subfamily. Monomer.

Its subcellular location is the secreted. It catalyses the reaction Deacetylation of xylans and xylo-oligosaccharides.. Its pathway is glycan degradation; xylan degradation. Acetylxylan esterase involved in the hydrolysis of xylan, a major structural heterogeneous polysaccharide found in plant biomass representing the second most abundant polysaccharide in the biosphere, after cellulose. Degrades acetylated xylans by cleaving acetyl side groups from the hetero-xylan backbone. This chain is Probable acetylxylan esterase A (axeA), found in Neosartorya fischeri (strain ATCC 1020 / DSM 3700 / CBS 544.65 / FGSC A1164 / JCM 1740 / NRRL 181 / WB 181) (Aspergillus fischerianus).